A 441-amino-acid polypeptide reads, in one-letter code: Glutamyl-tRNA reductase (441 aa).

Residues 49–52 (TCNR), S109, 114–116 (EDQ), and Q120 contribute to the substrate site. The active-site Nucleophile is the C50. 190–195 (GAGKMS) contributes to the NADP(+) binding site.

It belongs to the glutamyl-tRNA reductase family. Homodimer.

The catalysed reaction is (S)-4-amino-5-oxopentanoate + tRNA(Glu) + NADP(+) = L-glutamyl-tRNA(Glu) + NADPH + H(+). It functions in the pathway porphyrin-containing compound metabolism; protoporphyrin-IX biosynthesis; 5-aminolevulinate from L-glutamyl-tRNA(Glu): step 1/2. Functionally, catalyzes the NADPH-dependent reduction of glutamyl-tRNA(Glu) to glutamate 1-semialdehyde (GSA). The protein is Glutamyl-tRNA reductase of Moorella thermoacetica (strain ATCC 39073 / JCM 9320).